A 395-amino-acid polypeptide reads, in one-letter code: Putative ankyrin repeat protein RF_0950 (395 aa).

7 ANK repeats span residues 3–32, 36–65, 69–98, 101–130, 134–166, 172–201, and 205–234; these read YQKELLIEAIQEDNLKEVQKLLQAGVNPNT, YGKLCIRSAINNENLDIVKVLLDYGADPNA, IKDPIILEAIRSRELGIINSLLKKGANPNV, RHENPIILSALPRGVNIVNTLLNNGADPNQ, NGNTALSIILERTGDINVDVTALLIEKVKEKAL, NGETCLHLAAQQGKIQMFDKYLDYYQTVNI, and AGNTPLYWSKLLGHTEISDMLNKRAEELNE. The Glutamine amidotransferase type-1 domain occupies 272–395; that stretch reads KTKLIYQGGD…YLKVPILKEK (124 aa). C377 serves as the catalytic Nucleophile.

In Rickettsia felis (strain ATCC VR-1525 / URRWXCal2) (Rickettsia azadi), this protein is Putative ankyrin repeat protein RF_0950.